The chain runs to 83 residues: Cytochrome b559 subunit alpha (83 aa).

Residues valine 21 to tryptophan 35 traverse the membrane as a helical segment. Histidine 23 lines the heme pocket.

It belongs to the PsbE/PsbF family. Heterodimer of an alpha subunit and a beta subunit. PSII is composed of 1 copy each of membrane proteins PsbA, PsbB, PsbC, PsbD, PsbE, PsbF, PsbH, PsbI, PsbJ, PsbK, PsbL, PsbM, PsbT, PsbX, PsbY, PsbZ, Psb30/Ycf12, at least 3 peripheral proteins of the oxygen-evolving complex and a large number of cofactors. It forms dimeric complexes. Heme b serves as cofactor.

It localises to the plastid. The protein resides in the chloroplast thylakoid membrane. This b-type cytochrome is tightly associated with the reaction center of photosystem II (PSII). PSII is a light-driven water:plastoquinone oxidoreductase that uses light energy to abstract electrons from H(2)O, generating O(2) and a proton gradient subsequently used for ATP formation. It consists of a core antenna complex that captures photons, and an electron transfer chain that converts photonic excitation into a charge separation. This is Cytochrome b559 subunit alpha from Chlorella vulgaris (Green alga).